We begin with the raw amino-acid sequence, 416 residues long: Glutamyl-tRNA reductase (416 aa).

Residues 51-54 (TCNR), Ser-110, 115-117 (EPQ), and Gln-121 each bind substrate. Cys-52 (nucleophile) is an active-site residue. An NADP(+)-binding site is contributed by 190–195 (GAGQTG).

This sequence belongs to the glutamyl-tRNA reductase family. In terms of assembly, homodimer.

The enzyme catalyses (S)-4-amino-5-oxopentanoate + tRNA(Glu) + NADP(+) = L-glutamyl-tRNA(Glu) + NADPH + H(+). It functions in the pathway porphyrin-containing compound metabolism; protoporphyrin-IX biosynthesis; 5-aminolevulinate from L-glutamyl-tRNA(Glu): step 1/2. Functionally, catalyzes the NADPH-dependent reduction of glutamyl-tRNA(Glu) to glutamate 1-semialdehyde (GSA). This is Glutamyl-tRNA reductase from Francisella tularensis subsp. tularensis (strain FSC 198).